The sequence spans 114 residues: Ig heavy chain V region (114 aa).

In terms of domain architecture, Ig-like spans 1–106 (EVQLQQSGAE…AVRVISRYFD (106 aa)).

The sequence is that of Ig heavy chain V region from Mus musculus (Mouse).